A 925-amino-acid polypeptide reads, in one-letter code: Proto-oncogene DBL (925 aa).

Residues 1–88 (MAEANPRRGK…ELGGTLQYCH (88 aa)) form the CRAL-TRIO domain. A Spectrin repeat occupies 221–322 (WKFEQDFQQL…EIKAKRIQLS (102 aa)). A DH domain is found at 495-675 (LKNHVLNELI…LDLLKSVNDS (181 aa)). The 123-residue stretch at 687 to 809 (NLNELGKMIM…WLKEIRNILL (123 aa)) folds into the PH domain.

It belongs to the MCF2 family. Interacts with an array of inositol phospholipids such as phosphatidylinositol 3-phosphate (PI3P), phosphatidylinositol 4-phosphate (PI4P) and phosphatidylinositol 5-phosphate (PI5P). May interact with CCPG1. Post-translationally, phosphorylation by TNK2 enhances guanine nucleotide exchange factor (GEF) activity toward Rho family proteins. Isoform 1 is expressed only in brain. Isoform 3 is expressed in heart, kidney, spleen, liver and testis. Isoform 4 is expressed in brain, heart, kidney, testis, placenta, stomach and peripheral blood. The protein is detectable in brain, heart, kidney, intestine, muscle, lung and testis.

It localises to the cytoplasm. It is found in the membrane. Its function is as follows. Guanine nucleotide exchange factor (GEF) that modulates the Rho family of GTPases. Promotes the conversion of some member of the Rho family GTPase from the GDP-bound to the GTP-bound form. Isoform 1 exhibits no activity toward RHOA, RAC1 or CDC42. Isoform 2 exhibits decreased GEF activity toward CDC42. Isoform 3 exhibits a weak but significant activity toward RAC1 and CDC42. Isoform 4 exhibits significant activity toward RHOA and CDC42. The truncated DBL oncogene is active toward RHOA, RAC1 and CDC42. The protein is Proto-oncogene DBL (MCF2) of Homo sapiens (Human).